The chain runs to 894 residues: Interleukin enhancer-binding factor 3 (894 aa).

The 374-residue stretch at 5–378 (RIFVNDDRHV…PMKRPMEEDG (374 aa)) folds into the DZF domain. A disordered region spans residues 50–86 (DEQEKGSSEQAESDNMDVPPEDDSKEGAGEQKTEHMT). The segment covering 60-73 (AESDNMDVPPEDDS) has biased composition (acidic residues). Serine 62 carries the post-translational modification Phosphoserine. Basic and acidic residues predominate over residues 74-86 (KEGAGEQKTEHMT). Lysine 100 bears the N6-acetyllysine mark. The residue at position 188 (threonine 188) is a Phosphothreonine; by PKR. A Phosphoserine modification is found at serine 190. A Glycyl lysine isopeptide (Lys-Gly) (interchain with G-Cter in ubiquitin) cross-link involves residue lysine 297. Residue threonine 315 is modified to Phosphothreonine; by PKR. Residue lysine 348 forms a Glycyl lysine isopeptide (Lys-Gly) (interchain with G-Cter in SUMO1) linkage. The tract at residues 363-401 (TTYAITPMKRPMEEDGEEKSPSKKKKKIQKKEEKAEPPQ) is disordered. The short motif at 371-389 (KRPMEEDGEEKSPSKKKKK) is the Bipartite nuclear localization signal element. The span at 372 to 383 (RPMEEDGEEKSP) shows a compositional bias: basic and acidic residues. A phosphoserine mark is found at serine 382 and serine 384. A Glycyl lysine isopeptide (Lys-Gly) (interchain with G-Cter in SUMO2) cross-link involves residue lysine 396. A DRBM 1 domain is found at 398-467 (EPPQAMNALM…AVKVLQDMGL (70 aa)). Lysine 460 is subject to N6-acetyllysine. Residues 466 to 524 (GLPTGAEGRDSSKGEDSAEETEAKPAVVAPAPVVEAVSTPSAAFPSDATAEQGPILTKH) are disordered. Residues 472–481 (EGRDSSKGED) show a composition bias toward basic and acidic residues. 3 positions are modified to phosphoserine: serine 476, serine 477, and serine 482. Residue lysine 489 forms a Glycyl lysine isopeptide (Lys-Gly) (interchain with G-Cter in SUMO2) linkage. Residues 489 to 508 (KPAVVAPAPVVEAVSTPSAA) are compositionally biased toward low complexity. A DRBM 2 domain is found at 524–590 (HGKNPVMELN…ALAALEKLFP (67 aa)). Threonine 592 carries the post-translational modification Phosphothreonine. Residues 609 to 894 (RGGPKFAAKP…ADHSMNYQYR (286 aa)) are interaction with PRMT1. 2 disordered regions span residues 625 to 660 (MGGP…FGGA) and 718 to 894 (QGDN…YQYR). Residues 644-660 (RGGSIRGRGRGRGFGGA) show a composition bias toward gly residues. Composition is skewed to low complexity over residues 743–770 (PSYG…YGPP) and 777–792 (YNHG…SYNS). Serine 792, serine 810, serine 812, and serine 816 each carry phosphoserine. Gly residues-rich tracts occupy residues 811 to 825 (GSGG…GSGG) and 832 to 851 (SHGG…GKQG). Residues 857-866 (NYNSPGSGQN) are compositionally biased toward polar residues. Positions 867–878 (YSGPPSSYQSSQ) are enriched in low complexity.

In terms of assembly, identified in a IGF2BP1-dependent mRNP granule complex containing untranslated mRNAs. Interacts with FUS and SMN. Interacts (via C-terminus) with PRMT1. Forms a complex with ILF2. Can also bind to PRKDC/XRCC7: this may stabilize the interaction of PRKDC/XRCC7 and the heterodimeric complex of XRCC6/KU70 and XRCC5/KU80. Forms a heteromeric complex with ZNF346 and ILF3. Found in a nuclear export complex with XPO5, ILF3, Ran and double-stranded RNA or double-stranded minihelix VA1 RNA. Found in a nuclear export complex with XPO5, RAN, ILF3, ZNF346 and double-stranded RNA. Interacts with XPO5 and ZNF346. Forms a complex with ILF2, YLPM1, KHDRBS1, RBMX, NCOA5 and PPP1CA. Interacts with AGO1 and AGO2. Interacts with DHX36; this interaction occurs in a RNA-dependent manner. Interacts with ELAVL1; this interaction occurs in a RNA-dependent manner. Interacts with HAVCR2; this interaction promotes ILF3 ubiquitination and subsequent degradation. Phosphorylated at Thr-188 and Thr-315 by PKR in response to certain RNA viruses. This phosphorylation results in the dissociation of ILF2 from the ILF2-ILF3 complex resulting in a cytoplasmic sequestration of ILF3 where it can bind to viral RNAs and impede viral replication. Post-translationally, methylated by protein arginine N-methyltransferase 1. In terms of processing, ubiquitinated at Lys-297 in a TRIM47-dependent manner; this 'Lys-48'-linked ubiquitination promotes ILF3 degradation. In terms of tissue distribution, ubiquitous.

Its subcellular location is the nucleus. It localises to the nucleolus. The protein localises to the cytoplasm. In terms of biological role, RNA-binding protein that plays an essential role in the biogenesis of circular RNAs (circRNAs) which are produced by back-splicing circularization of pre-mRNAs. Within the nucleus, promotes circRNAs processing by stabilizing the regulatory elements residing in the flanking introns of the circularized exons. Plays thereby a role in the back-splicing of a subset of circRNAs. As a consequence, participates in a wide range of transcriptional and post-transcriptional processes. Binds to poly-U elements and AU-rich elements (AREs) in the 3'-UTR of target mRNAs. Upon viral infection, ILF3 accumulates in the cytoplasm and participates in the innate antiviral response. Mechanistically, ILF3 becomes phosphorylated and activated by the double-stranded RNA-activated protein kinase/PKR which releases ILF3 from cellular mature circRNAs. In turn, unbound ILF3 molecules are able to interact with and thus inhibit viral mRNAs. Its function is as follows. (Microbial infection) Plays a positive role in HIV-1 virus production by binding to and thereby stabilizing HIV-1 RNA, together with ILF3. This Homo sapiens (Human) protein is Interleukin enhancer-binding factor 3 (ILF3).